Consider the following 372-residue polypeptide: DNA replication and repair protein RecF (372 aa).

ATP is bound at residue 30-37 (GENAQGKT).

The protein belongs to the RecF family.

The protein localises to the cytoplasm. Functionally, the RecF protein is involved in DNA metabolism; it is required for DNA replication and normal SOS inducibility. RecF binds preferentially to single-stranded, linear DNA. It also seems to bind ATP. The protein is DNA replication and repair protein RecF of Shouchella clausii (strain KSM-K16) (Alkalihalobacillus clausii).